We begin with the raw amino-acid sequence, 319 residues long: Beta-ketoacyl-[acyl-carrier-protein] synthase III (319 aa).

Active-site residues include C112 and H246. An ACP-binding region spans residues 247 to 251; sequence QANFR. The active site involves N276.

This sequence belongs to the thiolase-like superfamily. FabH family. In terms of assembly, homodimer.

The protein resides in the cytoplasm. The catalysed reaction is malonyl-[ACP] + acetyl-CoA + H(+) = 3-oxobutanoyl-[ACP] + CO2 + CoA. The protein operates within lipid metabolism; fatty acid biosynthesis. Functionally, catalyzes the condensation reaction of fatty acid synthesis by the addition to an acyl acceptor of two carbons from malonyl-ACP. Catalyzes the first condensation reaction which initiates fatty acid synthesis and may therefore play a role in governing the total rate of fatty acid production. Possesses both acetoacetyl-ACP synthase and acetyl transacylase activities. Its substrate specificity determines the biosynthesis of branched-chain and/or straight-chain of fatty acids. The protein is Beta-ketoacyl-[acyl-carrier-protein] synthase III of Shewanella oneidensis (strain ATCC 700550 / JCM 31522 / CIP 106686 / LMG 19005 / NCIMB 14063 / MR-1).